The primary structure comprises 149 residues: Phosphoribosyl-AMP cyclohydrolase (149 aa).

Asp-92 is a Mg(2+) binding site. Residue Cys-93 coordinates Zn(2+). Mg(2+) is bound by residues Asp-94 and Asp-96. Zn(2+) contacts are provided by Cys-111 and Cys-118.

The protein belongs to the PRA-CH family. As to quaternary structure, homodimer. Requires Mg(2+) as cofactor. Zn(2+) is required as a cofactor.

Its subcellular location is the cytoplasm. The catalysed reaction is 1-(5-phospho-beta-D-ribosyl)-5'-AMP + H2O = 1-(5-phospho-beta-D-ribosyl)-5-[(5-phospho-beta-D-ribosylamino)methylideneamino]imidazole-4-carboxamide. It participates in amino-acid biosynthesis; L-histidine biosynthesis; L-histidine from 5-phospho-alpha-D-ribose 1-diphosphate: step 3/9. Functionally, catalyzes the hydrolysis of the adenine ring of phosphoribosyl-AMP. The polypeptide is Phosphoribosyl-AMP cyclohydrolase (Rhizobium rhizogenes (strain K84 / ATCC BAA-868) (Agrobacterium radiobacter)).